A 370-amino-acid chain; its full sequence is MGSTGNAETQLTPTHVSDEEANLFAMQLASASVLPMVLKAAIELDVLEIMAKSIPHGSGAYISPAEIAAQLPTTNPDAPVMLDRVLRLLASYSVVTCSLRELPDGKVERLYGLAPVCKFLTKNEDGVSLAPLCLMNQDKVLMESWYYLKDAILDGGIPFNKAYGMTAFEYHGTDPRFNKVFNRGMSDHSTITMKKIFEMYTGFEALNTIVDVGGGTGAVLSMIVAKYPSIKGINFDLPHVIEDAPIYPGVEHVGGDMFVSVPKGDAIFMKWICHDWSDEHCLKFLKNCYAALPEHGKVIVAECILPLSPDPSLATKGVIHIDAIMLAHNPGGKERTEKEFEALAIGAGFKGFKVACCAFNTYVMEFLKTA.

The propeptide occupies 1–2 (MG). 135–141 (MNQDKVL) serves as a coordination point for substrate. Residues 167–185 (AFEYHGTDPRFNKVFNRGM) form a substrate binding region. Glycine 213, aspartate 236, aspartate 256, methionine 257, and lysine 270 together coordinate S-adenosyl-L-methionine. The active-site Proton acceptor is the histidine 274.

It belongs to the class I-like SAM-binding methyltransferase superfamily. Cation-independent O-methyltransferase family. COMT subfamily. In terms of assembly, homodimer.

The catalysed reaction is (E)-caffeate + S-adenosyl-L-methionine = (E)-ferulate + S-adenosyl-L-homocysteine + H(+). It functions in the pathway aromatic compound metabolism; phenylpropanoid biosynthesis. In terms of biological role, catalyzes the conversion of caffeic acid to ferulic acid and of 5-hydroxyferulic acid to sinapic acid. The resulting products may subsequently be converted to the corresponding alcohols that are incorporated into lignins. This chain is Caffeic acid 3-O-methyltransferase (COMT), found in Clarkia breweri (Fairy fans).